A 394-amino-acid chain; its full sequence is Protein LAX PANICLE 2 (394 aa).

The tract at residues 1-193 (MVPARSLAHP…PTPRHHHHDV (193 aa)) is disordered. Positions 8 to 20 (AHPHPHLVRRRRD) are enriched in basic residues. The span at 60 to 84 (QHDPPKQPPPREADDDHHRIQEREP) shows a compositional bias: basic and acidic residues. Composition is skewed to low complexity over residues 90–101 (TTTRNQRLQLQL), 119–131 (GTSG…SSSN), and 146–155 (GPASPGASAG). The segment covering 170–185 (APQPPTPTPTPTPTPT) has biased composition (pro residues).

Interacts with LAX1.

Its subcellular location is the nucleus. Involved in the regulation of shoot branching by controlling axillary meristem (AM) formation. Functions in association with LAX1 to regulate the process of AM formation. Possesses transactivation activity in yeast. This Oryza sativa subsp. japonica (Rice) protein is Protein LAX PANICLE 2.